Here is a 431-residue protein sequence, read N- to C-terminus: Glutamate-1-semialdehyde 2,1-aminomutase (431 aa).

Residue Lys269 is modified to N6-(pyridoxal phosphate)lysine.

The protein belongs to the class-III pyridoxal-phosphate-dependent aminotransferase family. HemL subfamily. In terms of assembly, homodimer. Pyridoxal 5'-phosphate serves as cofactor.

The protein localises to the cytoplasm. It carries out the reaction (S)-4-amino-5-oxopentanoate = 5-aminolevulinate. The protein operates within porphyrin-containing compound metabolism; protoporphyrin-IX biosynthesis; 5-aminolevulinate from L-glutamyl-tRNA(Glu): step 2/2. In Francisella tularensis subsp. mediasiatica (strain FSC147), this protein is Glutamate-1-semialdehyde 2,1-aminomutase.